Reading from the N-terminus, the 378-residue chain is Glutamate 5-kinase (378 aa).

ATP is bound at residue Lys19. Substrate-binding residues include Ser59, Asp146, and Asn158. 178–179 (TD) lines the ATP pocket. The region spanning 285–363 (RGSVAVDAGA…SEFERLLGYT (79 aa)) is the PUA domain.

Belongs to the glutamate 5-kinase family.

The protein resides in the cytoplasm. The enzyme catalyses L-glutamate + ATP = L-glutamyl 5-phosphate + ADP. It participates in amino-acid biosynthesis; L-proline biosynthesis; L-glutamate 5-semialdehyde from L-glutamate: step 1/2. Its function is as follows. Catalyzes the transfer of a phosphate group to glutamate to form L-glutamate 5-phosphate. This Polaromonas sp. (strain JS666 / ATCC BAA-500) protein is Glutamate 5-kinase.